A 78-amino-acid polypeptide reads, in one-letter code: Large ribosomal subunit protein bL28 (78 aa).

It belongs to the bacterial ribosomal protein bL28 family.

This chain is Large ribosomal subunit protein bL28, found in Edwardsiella ictaluri (strain 93-146).